Reading from the N-terminus, the 253-residue chain is A-type ATP synthase subunit B (253 aa).

This sequence belongs to the ATPase alpha/beta chains family. Has multiple subunits with at least A(3), B(3), C, D, E, F, H, I and proteolipid K(x).

It localises to the cell membrane. Functionally, component of the A-type ATP synthase that produces ATP from ADP in the presence of a proton gradient across the membrane. The B chain is a regulatory subunit. The chain is A-type ATP synthase subunit B from Methanothermococcus thermolithotrophicus (Methanococcus thermolithotrophicus).